The following is a 173-amino-acid chain: Ribosome maturation factor RimM (173 aa).

In terms of domain architecture, PRC barrel spans 78–157 (EEEFYLADLI…VLVVPPEEVE (80 aa)). The interval 152–173 (PPEEVEAQEPPEKDAGGDEPSP) is disordered.

This sequence belongs to the RimM family. Binds ribosomal protein uS19.

The protein localises to the cytoplasm. Its function is as follows. An accessory protein needed during the final step in the assembly of 30S ribosomal subunit, possibly for assembly of the head region. Essential for efficient processing of 16S rRNA. May be needed both before and after RbfA during the maturation of 16S rRNA. It has affinity for free ribosomal 30S subunits but not for 70S ribosomes. The chain is Ribosome maturation factor RimM from Beijerinckia indica subsp. indica (strain ATCC 9039 / DSM 1715 / NCIMB 8712).